Consider the following 278-residue polypeptide: Formyltetrahydrofolate deformylase (278 aa).

In terms of domain architecture, ACT spans 6-85 (ILLTDCPDDK…RLIGTQRKRI (80 aa)). Residue Asp223 is part of the active site.

This sequence belongs to the PurU family.

The catalysed reaction is (6R)-10-formyltetrahydrofolate + H2O = (6S)-5,6,7,8-tetrahydrofolate + formate + H(+). It functions in the pathway purine metabolism; IMP biosynthesis via de novo pathway; formate from 10-formyl-5,6,7,8-tetrahydrofolate: step 1/1. In terms of biological role, catalyzes the hydrolysis of 10-formyltetrahydrofolate (formyl-FH4) to formate and tetrahydrofolate (FH4). The protein is Formyltetrahydrofolate deformylase of Haemophilus influenzae (strain ATCC 51907 / DSM 11121 / KW20 / Rd).